Consider the following 126-residue polypeptide: Protein LiaI (126 aa).

The next 2 helical transmembrane spans lie at 11–31 (FLLI…GFII) and 56–76 (IIVG…VVGI).

Its subcellular location is the cell membrane. This Bacillus subtilis (strain 168) protein is Protein LiaI (liaI).